Here is a 189-residue protein sequence, read N- to C-terminus: S-protein homolog 26 (189 aa).

The N-terminal stretch at 1–25 (MISMNRLSILLFVFAFGLTMMSNTA) is a signal peptide.

The protein belongs to the plant self-incompatibility (S1) protein family.

It localises to the secreted. The protein is S-protein homolog 26 of Arabidopsis thaliana (Mouse-ear cress).